Reading from the N-terminus, the 120-residue chain is Large ribosomal subunit protein uL24 (120 aa).

Residues 1 to 26 are disordered; sequence MVRVISSQPRKQRKARYNAPHHMRGS. Residues 10–24 are compositionally biased toward basic residues; it reads RKQRKARYNAPHHMR.

It belongs to the universal ribosomal protein uL24 family. Part of the 50S ribosomal subunit.

In terms of biological role, one of two assembly initiator proteins, it binds directly to the 5'-end of the 23S rRNA, where it nucleates assembly of the 50S subunit. Functionally, located at the polypeptide exit tunnel on the outside of the subunit. In Methanospirillum hungatei JF-1 (strain ATCC 27890 / DSM 864 / NBRC 100397 / JF-1), this protein is Large ribosomal subunit protein uL24.